A 914-amino-acid chain; its full sequence is Isoleucine--tRNA ligase (914 aa).

A 'HIGH' region motif is present at residues 64–74 (PYANGNFHLGH). Residue Glu-557 participates in L-isoleucyl-5'-AMP binding. The short motif at 598-602 (AMSKS) is the 'KMSKS' region element. Position 601 (Lys-601) interacts with ATP. Positions 889, 892, 906, and 909 each coordinate Zn(2+).

The protein belongs to the class-I aminoacyl-tRNA synthetase family. IleS type 1 subfamily. In terms of assembly, monomer. It depends on Zn(2+) as a cofactor.

The protein resides in the cytoplasm. It catalyses the reaction tRNA(Ile) + L-isoleucine + ATP = L-isoleucyl-tRNA(Ile) + AMP + diphosphate. In terms of biological role, catalyzes the attachment of isoleucine to tRNA(Ile). As IleRS can inadvertently accommodate and process structurally similar amino acids such as valine, to avoid such errors it has two additional distinct tRNA(Ile)-dependent editing activities. One activity is designated as 'pretransfer' editing and involves the hydrolysis of activated Val-AMP. The other activity is designated 'posttransfer' editing and involves deacylation of mischarged Val-tRNA(Ile). This is Isoleucine--tRNA ligase from Leptospira borgpetersenii serovar Hardjo-bovis (strain JB197).